A 287-amino-acid chain; its full sequence is Formamidopyrimidine-DNA glycosylase (287 aa).

The Schiff-base intermediate with DNA role is filled by P2. The active-site Proton donor is the E3. The active-site Proton donor; for beta-elimination activity is the K61. Positions 95, 115, and 157 each coordinate DNA. The FPG-type zinc finger occupies 243–277; the sequence is NVYGRADQPCRRCGTPVRREAFMNRSSYSCPRCQP. R267 functions as the Proton donor; for delta-elimination activity in the catalytic mechanism.

The protein belongs to the FPG family. Monomer. Requires Zn(2+) as cofactor.

The enzyme catalyses Hydrolysis of DNA containing ring-opened 7-methylguanine residues, releasing 2,6-diamino-4-hydroxy-5-(N-methyl)formamidopyrimidine.. The catalysed reaction is 2'-deoxyribonucleotide-(2'-deoxyribose 5'-phosphate)-2'-deoxyribonucleotide-DNA = a 3'-end 2'-deoxyribonucleotide-(2,3-dehydro-2,3-deoxyribose 5'-phosphate)-DNA + a 5'-end 5'-phospho-2'-deoxyribonucleoside-DNA + H(+). In terms of biological role, involved in base excision repair of DNA damaged by oxidation or by mutagenic agents. Acts as a DNA glycosylase that recognizes and removes damaged bases. Has a preference for oxidized purines, such as 7,8-dihydro-8-oxoguanine (8-oxoG). Has AP (apurinic/apyrimidinic) lyase activity and introduces nicks in the DNA strand. Cleaves the DNA backbone by beta-delta elimination to generate a single-strand break at the site of the removed base with both 3'- and 5'-phosphates. The protein is Formamidopyrimidine-DNA glycosylase of Salinispora arenicola (strain CNS-205).